Reading from the N-terminus, the 275-residue chain is Sulfate transporter CysZ (275 aa).

The interval 1-24 is disordered; sequence MSSEKSSFPEKPPSFEKPSHSNTA. Residues 13–24 are compositionally biased toward basic and acidic residues; sequence PSFEKPSHSNTA. Transmembrane regions (helical) follow at residues 49 to 69, 93 to 113, 169 to 189, and 232 to 252; these read FVIL…WWLF, LIWP…FSTI, IVLL…PVLW, and ALVS…PVAV.

The protein belongs to the CysZ family.

It is found in the cell inner membrane. High affinity, high specificity proton-dependent sulfate transporter, which mediates sulfate uptake. Provides the sulfur source for the cysteine synthesis pathway. This chain is Sulfate transporter CysZ, found in Pectobacterium atrosepticum (strain SCRI 1043 / ATCC BAA-672) (Erwinia carotovora subsp. atroseptica).